We begin with the raw amino-acid sequence, 460 residues long: Elongation factor 1-alpha-B (460 aa).

The residue at position 2 (Gly2) is a N,N,N-trimethylglycine. Lys3 bears the N6,N6-dimethyllysine; alternate mark. An N6-methyllysine; alternate modification is found at Lys3. A tr-type G domain is found at 5 to 240; the sequence is KGHINVVVIG…DSIEPPARPT (236 aa). The tract at residues 14-21 is G1; sequence GHVDSGKS. 14-21 contacts GTP; the sequence is GHVDSGKS. An N6-methyllysine modification is found at Lys30. The G2 stretch occupies residues 70 to 74; the sequence is GITID. At Lys79 the chain carries N6,N6,N6-trimethyllysine. The interval 91–94 is G3; it reads DAPG. GTP-binding positions include 91–95 and 153–156; these read DAPGH and NKMD. The interval 153–156 is G4; it reads NKMD. Positions 192-194 are G5; the sequence is SGF. An N6,N6-dimethyllysine; alternate modification is found at Lys316. Lys316 carries the N6-methyllysine; alternate modification. Lys390 carries the N6-methyllysine modification.

Belongs to the TRAFAC class translation factor GTPase superfamily. Classic translation factor GTPase family. EF-Tu/EF-1A subfamily.

Its subcellular location is the cytoplasm. In terms of biological role, this protein promotes the GTP-dependent binding of aminoacyl-tRNA to the A-site of ribosomes during protein biosynthesis. This chain is Elongation factor 1-alpha-B (tef102), found in Schizosaccharomyces pombe (strain 972 / ATCC 24843) (Fission yeast).